The chain runs to 173 residues: MAQEKKQRVNEEISAPEVRLVGEDGEPLGIVSLNAALNAAEEAGLDLVEIAPMAQPPVCRVMDFGKFKYQEQKKAHEARLKQKQVQIKEVKLRPATDENDYQIKLRNLKRFLEEGDKCKVTLRFRGREMAHQEFGLRQLERVKADLEEIGQVEQMPKMEGRQMIMVISPKKNR.

This sequence belongs to the IF-3 family. Monomer.

The protein resides in the cytoplasm. Functionally, IF-3 binds to the 30S ribosomal subunit and shifts the equilibrium between 70S ribosomes and their 50S and 30S subunits in favor of the free subunits, thus enhancing the availability of 30S subunits on which protein synthesis initiation begins. The polypeptide is Translation initiation factor IF-3 (Aromatoleum aromaticum (strain DSM 19018 / LMG 30748 / EbN1) (Azoarcus sp. (strain EbN1))).